Consider the following 506-residue polypeptide: ATP synthase subunit alpha, chloroplastic (506 aa).

170-177 (GDRQTGKT) lines the ATP pocket.

The protein belongs to the ATPase alpha/beta chains family. As to quaternary structure, F-type ATPases have 2 components, CF(1) - the catalytic core - and CF(0) - the membrane proton channel. CF(1) has five subunits: alpha(3), beta(3), gamma(1), delta(1), epsilon(1). CF(0) has four main subunits: a, b, b' and c.

Its subcellular location is the plastid. It localises to the chloroplast thylakoid membrane. It carries out the reaction ATP + H2O + 4 H(+)(in) = ADP + phosphate + 5 H(+)(out). Functionally, produces ATP from ADP in the presence of a proton gradient across the membrane. The alpha chain is a regulatory subunit. The protein is ATP synthase subunit alpha, chloroplastic of Chlorella vulgaris (Green alga).